Reading from the N-terminus, the 264-residue chain is Tryptophan synthase alpha chain (264 aa).

Residues Glu-49 and Asp-60 each act as proton acceptor in the active site.

The protein belongs to the TrpA family. In terms of assembly, tetramer of two alpha and two beta chains.

It carries out the reaction (1S,2R)-1-C-(indol-3-yl)glycerol 3-phosphate + L-serine = D-glyceraldehyde 3-phosphate + L-tryptophan + H2O. Its pathway is amino-acid biosynthesis; L-tryptophan biosynthesis; L-tryptophan from chorismate: step 5/5. Functionally, the alpha subunit is responsible for the aldol cleavage of indoleglycerol phosphate to indole and glyceraldehyde 3-phosphate. The sequence is that of Tryptophan synthase alpha chain from Synechocystis sp. (strain ATCC 27184 / PCC 6803 / Kazusa).